Here is a 352-residue protein sequence, read N- to C-terminus: Phosphoribosylformylglycinamidine cyclo-ligase (352 aa).

The protein belongs to the AIR synthase family.

The protein localises to the cytoplasm. It catalyses the reaction 2-formamido-N(1)-(5-O-phospho-beta-D-ribosyl)acetamidine + ATP = 5-amino-1-(5-phospho-beta-D-ribosyl)imidazole + ADP + phosphate + H(+). It functions in the pathway purine metabolism; IMP biosynthesis via de novo pathway; 5-amino-1-(5-phospho-D-ribosyl)imidazole from N(2)-formyl-N(1)-(5-phospho-D-ribosyl)glycinamide: step 2/2. This chain is Phosphoribosylformylglycinamidine cyclo-ligase, found in Coxiella burnetii (strain RSA 331 / Henzerling II).